Reading from the N-terminus, the 416-residue chain is LysM domain-containing GPI-anchored protein 1 (416 aa).

The first 27 residues, 1–27 (MKIPEKPIFLIFVSLILASSLTFTATA), serve as a signal peptide directing secretion. Cystine bridges form between C34–C100, C40–C163, C98–C161, and C100–C163. N37 is a glycosylation site (N-linked (GlcNAc...) asparagine). The LysM 1 domain maps to 110-157 (THYKTRPSDNLGSIADSVYGGLVSAEQIQEANSVNDPSLLDVGTSLVI). An N-linked (GlcNAc...) asparagine glycan is attached at N165. Residues 176-219 (LSYVVKEIDTLVGIARRYSTTITDLMNVNAMGAPDVSSGDILAV) form the LysM 2 domain. Cystine bridges form between C224–C256 and C251–C279. N-linked (GlcNAc...) asparagine glycosylation occurs at N241. 3 N-linked (GlcNAc...) asparagine glycosylation sites follow: N288, N299, and N310. Residues 356–376 (DGPGSIASSPRSSMLPGGGIL) form a disordered region. A391 carries the GPI-anchor amidated alanine lipid modification. Positions 392 to 416 (SASSVSYFFITFLISIASFSLALSS) are cleaved as a propeptide — removed in mature form.

As to quaternary structure, interacts with peptidoglycans.

It is found in the cell membrane. Its subcellular location is the secreted. Required as a cell surface receptor for peptidoglycan (PGN) elicitor signaling leading to innate immunity. Plays an essential role in detecting PGNs and restricting bacterial growth (of Pseudomonas syringae pv. tomato DC3000 for example). The protein is LysM domain-containing GPI-anchored protein 1 (LYM1) of Arabidopsis thaliana (Mouse-ear cress).